The chain runs to 380 residues: Cytochrome b (380 aa).

A run of 4 helical transmembrane segments spans residues 34-54, 78-99, 114-134, and 179-199; these read FGSL…LLAM, WLIR…FLHI, WNTG…GYVL, and FFAL…THLM. Heme b-binding residues include H84 and H98. Residues H183 and H197 each coordinate heme b. H202 contacts a ubiquinone. Helical transmembrane passes span 227–247, 289–309, 321–341, and 348–368; these read LKDI…ALFS, LGGV…PFLH, LSQT…WVGS, and FIII…ILFP.

Belongs to the cytochrome b family. As to quaternary structure, the cytochrome bc1 complex contains 11 subunits: 3 respiratory subunits (MT-CYB, CYC1 and UQCRFS1), 2 core proteins (UQCRC1 and UQCRC2) and 6 low-molecular weight proteins (UQCRH/QCR6, UQCRB/QCR7, UQCRQ/QCR8, UQCR10/QCR9, UQCR11/QCR10 and a cleavage product of UQCRFS1). This cytochrome bc1 complex then forms a dimer. Heme b is required as a cofactor.

It is found in the mitochondrion inner membrane. Component of the ubiquinol-cytochrome c reductase complex (complex III or cytochrome b-c1 complex) that is part of the mitochondrial respiratory chain. The b-c1 complex mediates electron transfer from ubiquinol to cytochrome c. Contributes to the generation of a proton gradient across the mitochondrial membrane that is then used for ATP synthesis. The sequence is that of Cytochrome b (MT-CYB) from Tragopan satyra (Satyr tragopan).